We begin with the raw amino-acid sequence, 885 residues long: Cytosolic carboxypeptidase-like protein 5 (885 aa).

The Peptidase M14 domain maps to Tyr150–Ala576. 2 residues coordinate Zn(2+): His247 and Glu250. Disordered regions lie at residues Ser341–Glu364 and Glu392–Pro428. Residues Ala344–Pro356 show a composition bias toward polar residues. The segment covering Ser393–Glu408 has biased composition (basic and acidic residues). Residues Ser411–Pro428 show a composition bias toward polar residues. Residue His440 coordinates Zn(2+). Glu522 (proton donor/acceptor) is an active-site residue. The segment covering Ser606–Thr668 has biased composition (polar residues). Disordered stretches follow at residues Ser606–Leu788 and Ala866–Thr885. Over residues Arg682–Arg691 the composition is skewed to basic and acidic residues. A compositionally biased stretch (low complexity) spans Leu712 to Gly749.

It belongs to the peptidase M14 family. Zn(2+) is required as a cofactor.

The protein resides in the cytoplasm. It is found in the cytosol. Its subcellular location is the nucleus. It localises to the cytoskeleton. The protein localises to the spindle. The protein resides in the midbody. The catalysed reaction is gamma-L-glutamyl-L-glutamyl-[protein] + H2O = L-glutamyl-[protein] + L-glutamate. It catalyses the reaction (L-glutamyl)(n+1)-gamma-L-glutamyl-L-glutamyl-[protein] + H2O = (L-glutamyl)(n)-gamma-L-glutamyl-L-glutamyl-[protein] + L-glutamate. It carries out the reaction C-terminal L-alpha-aminoacyl-L-glutamyl-[tubulin] + H2O = C-terminal L-alpha-aminoacyl-[tubulin] + L-glutamate. The enzyme catalyses C-terminal L-alpha-aminoacyl-L-glutamyl-L-glutamyl-[tubulin] + H2O = C-terminal L-alpha-aminoacyl-L-glutamyl-[tubulin] + L-glutamate. Its function is as follows. Metallocarboxypeptidase that mediates deglutamylation of tubulin and non-tubulin target proteins. Catalyzes the removal of polyglutamate side chains present on the gamma-carboxyl group of glutamate residues within the C-terminal tail of alpha- and beta-tubulin. Cleaves alpha- and gamma-linked polyglutamate tubulin side-chain, as well as the branching point glutamate. Also catalyzes the removal of alpha-linked glutamate residues from the carboxy-terminus of alpha-tubulin. In Danio rerio (Zebrafish), this protein is Cytosolic carboxypeptidase-like protein 5 (agbl5).